We begin with the raw amino-acid sequence, 741 residues long: Zinc finger and BTB domain-containing protein 20 (741 aa).

The span at 1–17 (MLERKKPKTAENQKASE) shows a compositional bias: basic and acidic residues. Positions 1–32 (MLERKKPKTAENQKASEENEITQPGGSSAKPG) are disordered. The region spanning 104-167 (CDVTVRIHGS…MYSGVLRVSQ (64 aa)) is the BTB domain. A disordered region spans residues 203-235 (GIQDSGQDTPRGTPESGTSGQSSDTESGYLQSH). A compositionally biased stretch (polar residues) spans 206–235 (DSGQDTPRGTPESGTSGQSSDTESGYLQSH). The residue at position 211 (T211) is a Phosphothreonine. Residue K330 forms a Glycyl lysine isopeptide (Lys-Gly) (interchain with G-Cter in SUMO1); alternate linkage. K330 is covalently cross-linked (Glycyl lysine isopeptide (Lys-Gly) (interchain with G-Cter in SUMO2); alternate). The tract at residues 350-440 (RNESEECTED…SSPERSNEVE (91 aa)) is disordered. S353 carries the post-translational modification Phosphoserine. Positions 354-367 (EECTEDTDQAEGTE) are enriched in acidic residues. T357 bears the Phosphothreonine mark. K371 participates in a covalent cross-link: Glycyl lysine isopeptide (Lys-Gly) (interchain with G-Cter in SUMO2). Residues 404-423 (AEPTQPEQAAEAPAEGGPQT) are compositionally biased toward low complexity. Polar residues predominate over residues 424-434 (NQLETGASSPE). 4 consecutive C2H2-type zinc fingers follow at residues 578–600 (YECT…MFVH), 606–628 (HQCS…MVTH), 634–656 (YQCS…MRLH), and 662–684 (YECY…VALH). T690 and T695 each carry phosphothreonine. The C2H2-type 5 zinc finger occupies 715–737 (YVCSVCPAKFDQIEQFNDHMRMH). Residue K723 forms a Glycyl lysine isopeptide (Lys-Gly) (interchain with G-Cter in SUMO2) linkage.

In terms of assembly, can homodimerize. Binds to DNA. Post-translationally, sumoylated with SUMO1. As to expression, expressed in spleen, lymph node, thymus, peripheral blood leukocytes, and fetal liver.

The protein localises to the nucleus. In terms of biological role, may be a transcription factor that may be involved in hematopoiesis, oncogenesis, and immune responses. Plays a role in postnatal myogenesis, may be involved in the regulation of satellite cells self-renewal. This chain is Zinc finger and BTB domain-containing protein 20 (ZBTB20), found in Homo sapiens (Human).